The following is a 313-amino-acid chain: Small ribosomal subunit protein uS2 (313 aa).

Residues 234 to 243 (DEEAKEEKTK) show a composition bias toward basic and acidic residues. The interval 234-313 (DEEAKEEKTK…ASKAEAEEGK (80 aa)) is disordered. Positions 244-256 (AKTTAKKVVTKKA) are enriched in basic residues. Basic and acidic residues predominate over residues 266–297 (AEKKSEKPTTEKRPTKEAAETKETSEEPKTKE).

Belongs to the universal ribosomal protein uS2 family.

The polypeptide is Small ribosomal subunit protein uS2 (Coxiella burnetii (strain Dugway 5J108-111)).